The following is a 93-amino-acid chain: LSM complex subunit lsm3 (93 aa).

Residues 9–93 form the Sm domain; it reads EPLDLVRLSL…SVILIAPPRN (85 aa). A Phosphoserine modification is found at Ser84.

The protein belongs to the snRNP Sm proteins family. In terms of assembly, component of the heptameric LSM1-LSM7 complex that forms a seven-membered ring structure with a donut shape. The LSm subunits are arranged in the order lsm1, lsm2, lsm3, lsm6, lsm5, lsm7 and lsm4. Component of the heptameric LSM2-LSM8 complex that forms a seven-membered ring structure with a donut shape. The LSm subunits are arranged in the order lsm8, lsm2, lsm3, lsm6, lsm5, lsm7 and lsm4.

The protein localises to the nucleus. Its subcellular location is the cytoplasm. Its function is as follows. Component of LSm protein complexes, which are involved in RNA processing and may function in a chaperone-like manner. Component of the cytoplasmic LSM1-LSM7 complex which is involved in mRNA degradation by activating the decapping step. The LSM1-LSM7 complex loads onto the 3'-end of single stranded RNA. Component of the nuclear LSM2-LSM8 complex, which is involved in spliceosome assembly. The LSM2-LSM8 complex plays a role in the biogenesis of the spliceosomal U4/U6-U5 tri-snRNP complex by accelerating prp24-mediated annealing of U4/U6 di-snRNA. The LSM2-LSM8 complex binds U6 snRNA terminating with a cyclic 2',3' phosphate group; RNA with an unmodified 3' hydroxyl or non-cyclic 3' phosphate is bound less tightly. In Schizosaccharomyces pombe (strain 972 / ATCC 24843) (Fission yeast), this protein is LSM complex subunit lsm3 (lsm3).